A 457-amino-acid polypeptide reads, in one-letter code: Siroheme synthase (457 aa).

The segment at Met1–Thr204 is precorrin-2 dehydrogenase /sirohydrochlorin ferrochelatase. NAD(+) contacts are provided by residues Asp22–Val23 and Leu43–Thr44. A Phosphoserine modification is found at Ser128. The segment at Gly216–Tyr457 is uroporphyrinogen-III C-methyltransferase. Residue Pro225 participates in S-adenosyl-L-methionine binding. Asp248 serves as the catalytic Proton acceptor. Lys270 acts as the Proton donor in catalysis. S-adenosyl-L-methionine contacts are provided by residues Gly301–Asp303, Ile306, Thr331–Ala332, Met382, and Gly411.

It in the N-terminal section; belongs to the precorrin-2 dehydrogenase / sirohydrochlorin ferrochelatase family. In the C-terminal section; belongs to the precorrin methyltransferase family.

The enzyme catalyses uroporphyrinogen III + 2 S-adenosyl-L-methionine = precorrin-2 + 2 S-adenosyl-L-homocysteine + H(+). It carries out the reaction precorrin-2 + NAD(+) = sirohydrochlorin + NADH + 2 H(+). The catalysed reaction is siroheme + 2 H(+) = sirohydrochlorin + Fe(2+). The protein operates within cofactor biosynthesis; adenosylcobalamin biosynthesis; precorrin-2 from uroporphyrinogen III: step 1/1. It functions in the pathway cofactor biosynthesis; adenosylcobalamin biosynthesis; sirohydrochlorin from precorrin-2: step 1/1. Its pathway is porphyrin-containing compound metabolism; siroheme biosynthesis; precorrin-2 from uroporphyrinogen III: step 1/1. It participates in porphyrin-containing compound metabolism; siroheme biosynthesis; siroheme from sirohydrochlorin: step 1/1. The protein operates within porphyrin-containing compound metabolism; siroheme biosynthesis; sirohydrochlorin from precorrin-2: step 1/1. Functionally, multifunctional enzyme that catalyzes the SAM-dependent methylations of uroporphyrinogen III at position C-2 and C-7 to form precorrin-2 via precorrin-1. Then it catalyzes the NAD-dependent ring dehydrogenation of precorrin-2 to yield sirohydrochlorin. Finally, it catalyzes the ferrochelation of sirohydrochlorin to yield siroheme. This Salmonella heidelberg (strain SL476) protein is Siroheme synthase.